We begin with the raw amino-acid sequence, 353 residues long: MKKIIIMAGGTCGHIFPGLEIAKSLINKGWKVFWLGTSKNIESKIVPKYGITIKYINISGVRGKNLFELMAIPFKLIIACYQAKKIIENINPDIILGMGGYVSVPGGIISYLYKKPLIIHEQNKIAGLANKLLSKFTTINMQAFANTILTSKSITVGNPLRTSITNLKKSWDRFENRSGPLRILVVGGSQGTQIFNFCFPKVALVLKNKIKLWHQIGKKNINIIHKLYDIHNNLAIYKITPFIKNISKAYFWADLIICRAGALTVSEIQYIGLPAIFVPFPHKDQHQYWNAYPLKMIGGAKIIMQERFNVNVIITLLKNLNRQKLIVMAKKLRSSYKLNSIKTITKIIENITH.

UDP-N-acetyl-alpha-D-glucosamine-binding positions include N123, R161, S189, I243, 262–267, and Q287; that span reads ALTVSE.

The protein belongs to the glycosyltransferase 28 family. MurG subfamily.

The protein localises to the cell membrane. The enzyme catalyses di-trans,octa-cis-undecaprenyl diphospho-N-acetyl-alpha-D-muramoyl-L-alanyl-D-glutamyl-meso-2,6-diaminopimeloyl-D-alanyl-D-alanine + UDP-N-acetyl-alpha-D-glucosamine = di-trans,octa-cis-undecaprenyl diphospho-[N-acetyl-alpha-D-glucosaminyl-(1-&gt;4)]-N-acetyl-alpha-D-muramoyl-L-alanyl-D-glutamyl-meso-2,6-diaminopimeloyl-D-alanyl-D-alanine + UDP + H(+). The protein operates within cell wall biogenesis; peptidoglycan biosynthesis. Cell wall formation. Catalyzes the transfer of a GlcNAc subunit on undecaprenyl-pyrophosphoryl-MurNAc-pentapeptide (lipid intermediate I) to form undecaprenyl-pyrophosphoryl-MurNAc-(pentapeptide)GlcNAc (lipid intermediate II). The sequence is that of UDP-N-acetylglucosamine--N-acetylmuramyl-(pentapeptide) pyrophosphoryl-undecaprenol N-acetylglucosamine transferase from Buchnera aphidicola subsp. Baizongia pistaciae (strain Bp).